Here is a 131-residue protein sequence, read N- to C-terminus: Bacteriohemerythrin (131 aa).

Fe cation contacts are provided by His-20, Glu-23, His-56, Glu-60, His-75, His-79, His-117, and Asp-122.

It belongs to the hemerythrin family. In terms of assembly, monomer.

In terms of biological role, oxygen-binding protein. May be involved in a storage mechanism or for delivery to oxygen-requiring enzymes. The oxygen-binding site contains two iron atoms. The chain is Bacteriohemerythrin from Aquifex aeolicus (strain VF5).